Here is a 224-residue protein sequence, read N- to C-terminus: Glutathione S-transferase U1 (224 aa).

In terms of domain architecture, GST N-terminal spans 6 to 85 (ESVKLLGFWA…YIDQTWKNSP (80 aa)). Residues 16-17 (SP), 42-43 (NK), 56-57 (KV), and 69-70 (ES) each bind glutathione. A GST C-terminal domain is found at 90–217 (DPYEKAMARF…EKQIERMTKI (128 aa)). T151 carries the phosphothreonine modification.

The protein belongs to the GST superfamily. Tau family.

Its subcellular location is the cytoplasm. It is found in the cytosol. It carries out the reaction RX + glutathione = an S-substituted glutathione + a halide anion + H(+). Functionally, may be involved in the conjugation of reduced glutathione to a wide number of exogenous and endogenous hydrophobic electrophiles and have a detoxification role against certain herbicides. This Arabidopsis thaliana (Mouse-ear cress) protein is Glutathione S-transferase U1 (GSTU1).